The sequence spans 415 residues: Carboxypeptidase G2 (415 aa).

The first 22 residues, 1–22, serve as a signal peptide directing secretion; it reads MRPSIHRTAIAAVLATAFVAGT. Histidine 112 lines the Zn(2+) pocket. The active site involves aspartate 114. Aspartate 141 provides a ligand contact to Zn(2+). The active-site Proton acceptor is the glutamate 175. The Zn(2+) site is built by glutamate 176, glutamate 200, and histidine 385.

It belongs to the peptidase M20A family. As to quaternary structure, homodimer. It depends on Zn(2+) as a cofactor.

It carries out the reaction Release of C-terminal glutamate residues from a wide range of N-acylating moieties, including peptidyl, aminoacyl, benzoyl, benzyloxycarbonyl, folyl and pteroyl groups.. Catalyzes the hydrolysis of reduced and non-reduced folates to pteroates and L-glutamate. This enzyme has a broad specificity. The protein is Carboxypeptidase G2 (cpg2) of Pseudomonas sp. (strain RS-16).